The primary structure comprises 130 residues: Large ribosomal subunit protein bL20 (130 aa).

Belongs to the bacterial ribosomal protein bL20 family.

In terms of biological role, binds directly to 23S ribosomal RNA and is necessary for the in vitro assembly process of the 50S ribosomal subunit. It is not involved in the protein synthesizing functions of that subunit. The chain is Large ribosomal subunit protein bL20 from Clavibacter michiganensis subsp. michiganensis (strain NCPPB 382).